The following is a 111-amino-acid chain: Flagellar hook-basal body complex protein FliE (111 aa).

The protein belongs to the FliE family.

It is found in the bacterial flagellum basal body. This Brucella ovis (strain ATCC 25840 / 63/290 / NCTC 10512) protein is Flagellar hook-basal body complex protein FliE.